The primary structure comprises 252 residues: 3-dehydroquinate dehydratase (252 aa).

Residues Ser-21, 46–48 (EWR), and Arg-82 each bind 3-dehydroquinate. The Proton donor/acceptor role is filled by His-143. Catalysis depends on Lys-170, which acts as the Schiff-base intermediate with substrate. Arg-213, Ser-232, and Gln-236 together coordinate 3-dehydroquinate.

This sequence belongs to the type-I 3-dehydroquinase family. As to quaternary structure, homodimer.

The enzyme catalyses 3-dehydroquinate = 3-dehydroshikimate + H2O. The protein operates within metabolic intermediate biosynthesis; chorismate biosynthesis; chorismate from D-erythrose 4-phosphate and phosphoenolpyruvate: step 3/7. Its function is as follows. Involved in the third step of the chorismate pathway, which leads to the biosynthesis of aromatic amino acids. Catalyzes the cis-dehydration of 3-dehydroquinate (DHQ) and introduces the first double bond of the aromatic ring to yield 3-dehydroshikimate. This Escherichia coli (strain SE11) protein is 3-dehydroquinate dehydratase.